Consider the following 198-residue polypeptide: Anthranilate synthase component 2 (198 aa).

The 194-residue stretch at 1–194 (MILIIDNYDS…VNQVNENKES (194 aa)) folds into the Glutamine amidotransferase type-1 domain. Position 50–52 (50–52 (GPG)) interacts with L-glutamine. The Nucleophile; for GATase activity role is filled by C77. Residues Q81 and 128–129 (SI) each bind L-glutamine. Residues H168 and E170 each act as for GATase activity in the active site.

Heterotetramer consisting of two non-identical subunits: a beta subunit (TrpG) and a large alpha subunit (TrpE).

The enzyme catalyses chorismate + L-glutamine = anthranilate + pyruvate + L-glutamate + H(+). Its pathway is amino-acid biosynthesis; L-tryptophan biosynthesis; L-tryptophan from chorismate: step 1/5. In terms of biological role, part of a heterotetrameric complex that catalyzes the two-step biosynthesis of anthranilate, an intermediate in the biosynthesis of L-tryptophan. In the first step, the glutamine-binding beta subunit (TrpG) of anthranilate synthase (AS) provides the glutamine amidotransferase activity which generates ammonia as a substrate that, along with chorismate, is used in the second step, catalyzed by the large alpha subunit of AS (TrpE) to produce anthranilate. In the absence of TrpG, TrpE can synthesize anthranilate directly from chorismate and high concentrations of ammonia. This Lactococcus lactis subsp. lactis (strain IL1403) (Streptococcus lactis) protein is Anthranilate synthase component 2 (trpG).